The chain runs to 62 residues: Large ribosomal subunit protein bL32 (62 aa).

Positions 28–62 are disordered; that stretch reads SIEPTTGEVHRRHHISPDGFYRGRQVIKAKEQDEE.

The protein belongs to the bacterial ribosomal protein bL32 family.

In Thioalkalivibrio sulfidiphilus (strain HL-EbGR7), this protein is Large ribosomal subunit protein bL32.